Here is a 466-residue protein sequence, read N- to C-terminus: 3-isopropylmalate dehydratase large subunit (466 aa).

3 residues coordinate [4Fe-4S] cluster: cysteine 347, cysteine 407, and cysteine 410.

The protein belongs to the aconitase/IPM isomerase family. LeuC type 1 subfamily. Heterodimer of LeuC and LeuD. It depends on [4Fe-4S] cluster as a cofactor.

The catalysed reaction is (2R,3S)-3-isopropylmalate = (2S)-2-isopropylmalate. It functions in the pathway amino-acid biosynthesis; L-leucine biosynthesis; L-leucine from 3-methyl-2-oxobutanoate: step 2/4. Catalyzes the isomerization between 2-isopropylmalate and 3-isopropylmalate, via the formation of 2-isopropylmaleate. The sequence is that of 3-isopropylmalate dehydratase large subunit from Escherichia coli O45:K1 (strain S88 / ExPEC).